A 56-amino-acid polypeptide reads, in one-letter code: MAKSKGARIVVTLECRSAEGVYRYTTTKNRRNNPNKMELKKYCPLSKKHEVFKEIK.

The protein belongs to the bacterial ribosomal protein bL33 family.

Its subcellular location is the plastid. The protein resides in the chloroplast. The chain is Large ribosomal subunit protein bL33c from Rhodomonas salina (Cryptomonas salina).